A 468-amino-acid chain; its full sequence is Glutamate--tRNA ligase (468 aa).

The short motif at 8 to 18 (PSPTGFLHVGG) is the 'HIGH' region element. C97, C99, C124, and D126 together coordinate Zn(2+). A 'KMSKS' region motif is present at residues 236-240 (KLSKR). K239 lines the ATP pocket.

This sequence belongs to the class-I aminoacyl-tRNA synthetase family. Glutamate--tRNA ligase type 1 subfamily. Monomer. It depends on Zn(2+) as a cofactor.

The protein localises to the cytoplasm. It catalyses the reaction tRNA(Glu) + L-glutamate + ATP = L-glutamyl-tRNA(Glu) + AMP + diphosphate. Its function is as follows. Catalyzes the attachment of glutamate to tRNA(Glu) in a two-step reaction: glutamate is first activated by ATP to form Glu-AMP and then transferred to the acceptor end of tRNA(Glu). The chain is Glutamate--tRNA ligase from Francisella tularensis subsp. mediasiatica (strain FSC147).